A 363-amino-acid polypeptide reads, in one-letter code: Large ribosomal subunit protein uL4 (363 aa).

It belongs to the universal ribosomal protein uL4 family. In terms of assembly, component of the large ribosomal subunit. Mature ribosomes consist of a small (40S) and a large (60S) subunit. The 40S subunit contains about 32 different proteins and 1 molecule of RNA (18S). The 60S subunit contains 45 different proteins and 3 molecules of RNA (25S, 5.8S and 5S).

Its subcellular location is the cytoplasm. In terms of biological role, component of the ribosome, a large ribonucleoprotein complex responsible for the synthesis of proteins in the cell. The small ribosomal subunit (SSU) binds messenger RNAs (mRNAs) and translates the encoded message by selecting cognate aminoacyl-transfer RNA (tRNA) molecules. The large subunit (LSU) contains the ribosomal catalytic site termed the peptidyl transferase center (PTC), which catalyzes the formation of peptide bonds, thereby polymerizing the amino acids delivered by tRNAs into a polypeptide chain. The nascent polypeptides leave the ribosome through a tunnel in the LSU and interact with protein factors that function in enzymatic processing, targeting, and the membrane insertion of nascent chains at the exit of the ribosomal tunnel. This is Large ribosomal subunit protein uL4 from Candida albicans (strain SC5314 / ATCC MYA-2876) (Yeast).